We begin with the raw amino-acid sequence, 531 residues long: uncharacterized protein (531 aa).

The N-terminal stretch at 1–22 is a signal peptide; it reads MRLQFKLLGFLTLLGTSTILSA. Residue C23 is the site of N-palmitoyl cysteine attachment. Residue C23 is the site of S-diacylglycerol cysteine attachment. The segment at 31-51 is disordered; that stretch reads EPNNIEESGPITPTTPTTDVP. Positions 40 to 51 are enriched in low complexity; sequence PITPTTPTTDVP.

Belongs to the MG067/MG068/MG395 family.

It is found in the cell membrane. This is an uncharacterized protein from Mycoplasma pneumoniae (strain ATCC 29342 / M129 / Subtype 1) (Mycoplasmoides pneumoniae).